The chain runs to 467 residues: ATP-dependent protease ATPase subunit HslU (467 aa).

ATP-binding positions include Val-22 and 64–69 (GVGKTE). A disordered region spans residues 166-185 (GQNQDEEEEPPTEEIKTKRS). ATP-binding residues include Asp-280, Glu-345, and Arg-417.

The protein belongs to the ClpX chaperone family. HslU subfamily. In terms of assembly, a double ring-shaped homohexamer of HslV is capped on each side by a ring-shaped HslU homohexamer. The assembly of the HslU/HslV complex is dependent on binding of ATP.

It is found in the cytoplasm. ATPase subunit of a proteasome-like degradation complex; this subunit has chaperone activity. The binding of ATP and its subsequent hydrolysis by HslU are essential for unfolding of protein substrates subsequently hydrolyzed by HslV. HslU recognizes the N-terminal part of its protein substrates and unfolds these before they are guided to HslV for hydrolysis. The sequence is that of ATP-dependent protease ATPase subunit HslU from Staphylococcus epidermidis (strain ATCC 35984 / DSM 28319 / BCRC 17069 / CCUG 31568 / BM 3577 / RP62A).